We begin with the raw amino-acid sequence, 727 residues long: Pentatricopeptide repeat-containing protein At2g33680 (727 aa).

PPR repeat units follow at residues 13–47, 48–78, 79–116, 117–150, 152–182, 183–213, 220–254, 255–285, 286–320, 321–355, 356–386, 387–421, 422–456, 457–487, 488–522, 523–553, and 559–593; these read HTST…GAST, CIQH…IICK, DVVS…DILP, NAYT…MSSF, DIYV…MPER, NTYT…FLRE, SDYV…GLLG, FVAL…SGDR, NSIT…GIKP, SEYT…GFER, HLFA…LQER, DVAL…GIIP, NDPT…GFGL, EVPI…TPNK, DVVS…GMEP, DDVT…MSDQ, and KVDH…HGLC. Residues 594-669 are type E motif; that stretch reads LWRILLSACK…EVGCSWIELK (76 aa). Residues 670 to 700 form a type E(+) motif region; sequence NQYHVFVVGDTMHPMIEETKDLVCLVSRQMI.

This sequence belongs to the PPR family. PCMP-E subfamily.

The chain is Pentatricopeptide repeat-containing protein At2g33680 (PCMP-E19) from Arabidopsis thaliana (Mouse-ear cress).